The following is an 893-amino-acid chain: DNA endonuclease RBBP8 (893 aa).

Residues 22–45 are essential for binding to the MRN complex and for RPA focus formation on DNA damage; it reads ELWTKLKEYHDKEVQGLQVKVTKL. The stretch at 35–84 forms a coiled coil; the sequence is VQGLQVKVTKLKKERILDAQRLEEFFTKNQQLRDQQKVLQETIKILEDRL. The segment at 45 to 160 is required for interaction with LMO4, probably by stabilizing the interaction through RPPB8 dimerization; the sequence is LKKERILDAQ…AELACEENII (116 aa). Residues Lys-62 and Lys-115 each participate in a glycyl lysine isopeptide (Lys-Gly) (interchain with G-Cter in SUMO2) cross-link. A coiled-coil region spans residues 117 to 138; it reads ITELMNEKNTLQEENKKLSEQL. Lys-193 is covalently cross-linked (Glycyl lysine isopeptide (Lys-Gly) (interchain with G-Cter in SUMO2)). Residues Ser-233 and Ser-276 each carry the phosphoserine modification. The span at 296–307 shows a compositional bias: basic and acidic residues; that stretch reads MESARSKEDSLR. The disordered stretch occupies residues 296–324; the sequence is MESARSKEDSLRFSDSASKTPPQEFTTRA. A compositionally biased stretch (polar residues) spans 308–324; the sequence is FSDSASKTPPQEFTTRA. A Phosphothreonine modification is found at Thr-315. Ser-325, Ser-326, and Ser-348 each carry phosphoserine. Residues Lys-359 and Lys-377 each participate in a glycyl lysine isopeptide (Lys-Gly) (interchain with G-Cter in SUMO2) cross-link. Phosphoserine is present on Ser-378. Glycyl lysine isopeptide (Lys-Gly) (interchain with G-Cter in SUMO2) cross-links involve residues Lys-394, Lys-403, Lys-409, and Lys-437. A PXDLS motif motif is present at residues 489 to 493; sequence PLDLS. Positions 508-556 are damage-recruitment motif; that stretch reads NETSKNKLKQATIYEALKPIPKGSSSGRKALSGDCMPAKDSWETYCLQP. Lys-525 is covalently cross-linked (Glycyl lysine isopeptide (Lys-Gly) (interchain with G-Cter in SUMO2); alternate). Residues Lys-529, Lys-570, and Lys-576 each participate in a glycyl lysine isopeptide (Lys-Gly) (interchain with G-Cter in SUMO2) cross-link. A Glycyl lysine isopeptide (Lys-Gly) (interchain with G-Cter in SUMO2); alternate cross-link involves residue Lys-602. Glycyl lysine isopeptide (Lys-Gly) (interchain with G-Cter in SUMO2) cross-links involve residues Lys-611, Lys-636, and Lys-638. A required for interaction with LMO4, probably by making physical contact with LMO4 region spans residues 639–683; it reads ALPSNQDTSFENIQWSVDPGADLSQYKMDVTVIDTKDSSHSRLGG. Position 662 is a phosphoserine; by ATM (Ser-662). A Glycyl lysine isopeptide (Lys-Gly) (interchain with G-Cter in SUMO2) cross-link involves residue Lys-674. Ser-677 is subject to Phosphoserine. Lys-716 is covalently cross-linked (Glycyl lysine isopeptide (Lys-Gly) (interchain with G-Cter in SUMO2)). Ser-720 is subject to Phosphoserine. Ser-742 is subject to Phosphoserine; by ATM. Lys-778 is covalently cross-linked (Glycyl lysine isopeptide (Lys-Gly) (interchain with G-Cter in SUMO2)). The short motif at 836 to 838 is the KLHL15-binding element; the sequence is FRY. 2 positions are modified to phosphothreonine: Thr-843 and Thr-855. Lys-865 is covalently cross-linked (Glycyl lysine isopeptide (Lys-Gly) (interchain with G-Cter in SUMO2)). The disordered stretch occupies residues 869–893; sequence DLSPRPKRRQPYNAVFSPKGKEQRT.

This sequence belongs to the COM1/SAE2/CtIP family. As to quaternary structure, homotetramer; formed by antiparallel association of helical extensions protruding from the N-termini of two parallel coiled-coil dimers. Forms a dumbbell-shaped particle in which polar globular domains are held about 30 nm apart by a central rod. Homotetramerization is required for DNA-end resection and repair. Interacts (via the PXDLS motif) with CTBP1; the interaction is disrupted via binding of the adenovirus E1A to CTBP1. Component of the BRCA1-RBBP8 complex. Interacts (the Ser-326 phosphorylated form) with BRCA1 (via the C-terminal BRCT domains): the interaction occurs in the G2 phase, ubiquitinates RBBP8 and involves RBBP8 in BRCA1-dependent G2/M checkpoint control on DNA damage. Interacts with RB1. Interacts with the MRN complex. Interacts directly with MRE11; the interaction is required for efficient homologous recombination (HR) and regulation of the MRN complex. Interacts (when phosphorylated by CDK1) with NBN; promoting association with the MRN complex. Interacts with LMO4 (via the LIM zinc-binding 1 domain). Interacts with SIAH1. Interacts with RNF138. Interacts with EXD2. Interacts with CUL3 and KLHL15; this interaction leads to RBBP8 proteasomal degradation. Directly interacts with PIN1; this interaction depends upon RBBP8 phosphorylation, predominantly at Thr-315. Interacts with FZR1; this interaction leads to APC/C-mediated RBBP8 proteasomal degradation. Interacts with AUNIP; leading to recruit RBBP8 to sites of DNA damage. Interacts with SAMHD1. Interacts with HDGFL2. Post-translationally, hyperphosphorylation upon ionizing radiation results in dissociation from BRCA1. Phosphorylation at Thr-843 by CDK1 is essential for the recruitment to DNA and the DNA repair function. Phosphorylation at Thr-843 and Thr-855 promote interaction with NBN and recruitment to double-strand breaks (DSBs). Phosphorylated on Ser-326 as cells enter G2 phase. Phosphorylated at Ser-326 as cells enter G2 phase. This phosphorylation is required for binding BRCA1 and for the G2/M DNA damage transition checkpoint control. Phosphorylation at Thr-315 is required for PIN1-binding, while phosphorylation at Ser-276 serves as a PIN1 isomerization site. Phosphorylation at Thr-315 is cell-cycle dependent. It steadily increases during S phase, peaks at late S/G2 phase, and drops at G1. Phosphorylation is not required for tetramerization. Binds to DNA more strongly when dephosphorylated. Ubiquitinated. Ubiquitination at multiple sites by BRCA1 (via its N-terminal RING domain) does not lead to its proteasomal degradation but instead the ubiquitinated RBBP8 binds to chromatin following DNA damage and may play a role in G2/M checkpoint control. Ubiquitinated by RNF138 at its N-terminus. Ubiquitinated through 'Lys-48' by the E3 CUL3-KLHL15 complex; this modification leads to proteasomal degradation. Ubiquitinated by the E3 FZR1/APC/C complex; this modification leads to proteasomal degradation.

It is found in the nucleus. The protein resides in the chromosome. Endonuclease that cooperates with the MRE11-RAD50-NBN (MRN) complex in DNA-end resection, the first step of double-strand break (DSB) repair through the homologous recombination (HR) pathway. HR is restricted to S and G2 phases of the cell cycle and preferentially repairs DSBs resulting from replication fork collapse. Key determinant of DSB repair pathway choice, as it commits cells to HR by preventing classical non-homologous end-joining (NHEJ). Specifically promotes the endonuclease activity of the MRN complex to clear DNA ends containing protein adducts: recruited to DSBs by NBN following phosphorylation by CDK1, and promotes the endonuclease activity of MRE11 to clear protein-DNA adducts and generate clean double-strand break ends. Functions downstream of the MRN complex and ATM, promotes ATR activation and its recruitment to DSBs in the S/G2 phase facilitating the generation of ssDNA. Component of the BRCA1-RBBP8 complex that regulates CHEK1 activation and controls cell cycle G2/M checkpoints on DNA damage. During immunoglobulin heavy chain class-switch recombination, promotes microhomology-mediated alternative end joining (A-NHEJ) and plays an essential role in chromosomal translocations. Binds preferentially to DNA Y-junctions and to DNA substrates with blocked ends and promotes intermolecular DNA bridging. The chain is DNA endonuclease RBBP8 (Rbbp8) from Mus musculus (Mouse).